The primary structure comprises 142 residues: Putative tyrosine phosphatase 123R (142 aa).

In terms of domain architecture, Tyrosine-protein phosphatase spans 2–137 (EPTKIVENLY…LAQFERWLNS (136 aa)). Cysteine 81 acts as the Phosphocysteine intermediate in catalysis.

The protein belongs to the protein-tyrosine phosphatase family.

The polypeptide is Putative tyrosine phosphatase 123R (Invertebrate iridescent virus 6 (IIV-6)).